The primary structure comprises 958 residues: MutS protein homolog 4 (958 aa).

Disordered stretches follow at residues 51 to 110 and 124 to 161; these read QEAA…SFGN and PVGTSSSSARDTTYPHTFRTPLSAGNPQRSGHKSWTPQ. Over residues 91-107 the composition is skewed to low complexity; it reads SSSSSSSPAPASAPGSS. 2 stretches are compositionally biased toward polar residues: residues 124–138 and 146–161; these read PVGTSSSSARDTTYP and SAGNPQRSGHKSWTPQ. Residue 702–709 participates in ATP binding; the sequence is GPNMSGKS.

The protein belongs to the DNA mismatch repair MutS family. In terms of assembly, heterooligomer of MSH4 and MSH5. In terms of tissue distribution, predominantly expressed in testis.

It localises to the chromosome. Its function is as follows. Involved in meiotic recombination. Required for reciprocal recombination and proper segregation of homologous chromosomes at meiosis. The sequence is that of MutS protein homolog 4 (Msh4) from Mus musculus (Mouse).